The primary structure comprises 348 residues: Lipopolysaccharide heptosyltransferase 2 (348 aa).

The protein belongs to the glycosyltransferase 9 family.

It catalyses the reaction an L-alpha-D-Hep-(1-&gt;5)-[alpha-Kdo-(2-&gt;4)]-alpha-Kdo-(2-&gt;6)-lipid A + ADP-L-glycero-beta-D-manno-heptose = an L-alpha-D-Hep-(1-&gt;3)-L-alpha-D-Hep-(1-&gt;5)-[alpha-Kdo-(2-&gt;4)]-alpha-Kdo-(2-&gt;6)-lipid A + ADP + H(+). The enzyme catalyses L-alpha-D-Hep-(1-&gt;5)-[alpha-Kdo-(2-&gt;4)]-alpha-Kdo-(2-&gt;6)-lipid A (E. coli) + ADP-L-glycero-beta-D-manno-heptose = L-alpha-D-Hep-(1-&gt;3)-L-alpha-D-Hep-(1-&gt;5)-[alpha-Kdo-(2-&gt;4)]-alpha-Kdo-(2-&gt;6)-lipid A (E. coli) + ADP + H(+). Its pathway is bacterial outer membrane biogenesis; LPS core biosynthesis. Functionally, glycosyltransferase involved in the biosynthesis of the core oligosaccharide region of lipopolysaccharide (LPS). Catalyzes the addition of the second heptose unit to the heptosyl-Kdo2-lipid A module. The analog ADP-mannose can serve as an alternative donor in place of ADP-L-glycero-D-manno-heptose, but with lower efficiency. This Escherichia coli (strain K12) protein is Lipopolysaccharide heptosyltransferase 2.